The primary structure comprises 266 residues: Translation initiation factor 2 subunit alpha (266 aa).

Residues 12 to 83 form the S1 motif domain; sequence GEILIATVKQ…RKGTVDVSLK (72 aa).

The protein belongs to the eIF-2-alpha family. As to quaternary structure, heterotrimer composed of an alpha, a beta and a gamma chain.

EIF-2 functions in the early steps of protein synthesis by forming a ternary complex with GTP and initiator tRNA. The polypeptide is Translation initiation factor 2 subunit alpha (Saccharolobus islandicus (strain Y.N.15.51 / Yellowstone #2) (Sulfolobus islandicus)).